The primary structure comprises 375 residues: Histidine biosynthesis bifunctional protein HisB (375 aa).

Residues 1 to 168 are histidinol-phosphatase; sequence MTPIVFIDRD…GIAHTLADAP (168 aa). The active-site Nucleophile is aspartate 8. 3 residues coordinate Mg(2+): aspartate 8, aspartate 10, and aspartate 128. Catalysis depends on aspartate 10, which acts as the Proton donor. Residues 169 to 375 are imidazoleglycerol-phosphate dehydratase; sequence RRAVVQRHTK…HVLPSTKGAL (207 aa).

The protein in the N-terminal section; belongs to the histidinol-phosphatase family. It in the C-terminal section; belongs to the imidazoleglycerol-phosphate dehydratase family. Mg(2+) serves as cofactor.

The protein resides in the cytoplasm. It carries out the reaction D-erythro-1-(imidazol-4-yl)glycerol 3-phosphate = 3-(imidazol-4-yl)-2-oxopropyl phosphate + H2O. The enzyme catalyses L-histidinol phosphate + H2O = L-histidinol + phosphate. Its pathway is amino-acid biosynthesis; L-histidine biosynthesis; L-histidine from 5-phospho-alpha-D-ribose 1-diphosphate: step 6/9. The protein operates within amino-acid biosynthesis; L-histidine biosynthesis; L-histidine from 5-phospho-alpha-D-ribose 1-diphosphate: step 8/9. This is Histidine biosynthesis bifunctional protein HisB from Xylella fastidiosa (strain 9a5c).